Consider the following 392-residue polypeptide: uncharacterized protein (392 aa).

The J domain occupies 7–76; it reads TEYYDLLGIS…RSQYDQFGKE (70 aa). Ser108 carries the post-translational modification Phosphoserine.

This is an uncharacterized protein from Schizosaccharomyces pombe (strain 972 / ATCC 24843) (Fission yeast).